The chain runs to 375 residues: Digeranylgeranylglycerophospholipid reductase 1 (375 aa).

FAD contacts are provided by Ala13, Glu32, Cys43, Ala44, Gly46, Arg92, Ala116, Asp275, Gly287, and Leu288. An a 2,3-bis-O-(geranylgeranyl)-sn-glycerol 1-phospholipid-binding site is contributed by Gly367.

This sequence belongs to the geranylgeranyl reductase family. DGGGPL reductase subfamily. It depends on FAD as a cofactor.

It catalyses the reaction a 2,3-bis-O-phytanyl-sn-glycerol 1-phospholipid + 8 A = a 2,3-bis-O-(geranylgeranyl)-sn-glycerol 1-phospholipid + 8 AH2. It carries out the reaction 2,3-bis-O-(phytanyl)-sn-glycerol 1-phosphate + 8 A = 2,3-bis-O-(geranylgeranyl)-sn-glycerol 1-phosphate + 8 AH2. The catalysed reaction is CDP-2,3-bis-O-(geranylgeranyl)-sn-glycerol + 8 AH2 = CDP-2,3-bis-O-(phytanyl)-sn-glycerol + 8 A. The enzyme catalyses archaetidylserine + 8 AH2 = 2,3-bis-O-phytanyl-sn-glycero-3-phospho-L-serine + 8 A. The protein operates within membrane lipid metabolism; glycerophospholipid metabolism. Is involved in the reduction of 2,3-digeranylgeranylglycerophospholipids (unsaturated archaeols) into 2,3-diphytanylglycerophospholipids (saturated archaeols) in the biosynthesis of archaeal membrane lipids. Catalyzes the formation of archaetidic acid (2,3-di-O-phytanyl-sn-glyceryl phosphate) from 2,3-di-O-geranylgeranylglyceryl phosphate (DGGGP) via the hydrogenation of each double bond of the isoprenoid chains. Is also probably able to reduce double bonds of geranyl groups in CDP-2,3-bis-O-(geranylgeranyl)-sn-glycerol and archaetidylserine, thus acting at various stages in the biosynthesis of archaeal membrane lipids. This chain is Digeranylgeranylglycerophospholipid reductase 1, found in Methanopyrus kandleri (strain AV19 / DSM 6324 / JCM 9639 / NBRC 100938).